A 660-amino-acid chain; its full sequence is DNA mismatch repair protein MutL (660 aa).

2 disordered regions span residues 368–426 and 439–461; these read PQQT…PTKK and NREQRESTSQVNEQSHTFRSTQQ. Positions 406–417 are enriched in low complexity; that stretch reads SSSSNSTAPSRS.

The protein belongs to the DNA mismatch repair MutL/HexB family.

Its function is as follows. This protein is involved in the repair of mismatches in DNA. It is required for dam-dependent methyl-directed DNA mismatch repair. May act as a 'molecular matchmaker', a protein that promotes the formation of a stable complex between two or more DNA-binding proteins in an ATP-dependent manner without itself being part of a final effector complex. The sequence is that of DNA mismatch repair protein MutL from Aliivibrio fischeri (strain ATCC 700601 / ES114) (Vibrio fischeri).